We begin with the raw amino-acid sequence, 273 residues long: Urease accessory protein UreD (273 aa).

The protein belongs to the UreD family. As to quaternary structure, ureD, UreF and UreG form a complex that acts as a GTP-hydrolysis-dependent molecular chaperone, activating the urease apoprotein by helping to assemble the nickel containing metallocenter of UreC. The UreE protein probably delivers the nickel.

It is found in the cytoplasm. Functionally, required for maturation of urease via the functional incorporation of the urease nickel metallocenter. This chain is Urease accessory protein UreD, found in Rhizobium leguminosarum bv. trifolii (strain WSM2304).